We begin with the raw amino-acid sequence, 166 residues long: tRNA-acetylating toxin (166 aa).

The disordered stretch occupies residues 1–22 (MSGYSAPRRISDADDVTSFSSG). One can recognise an N-acetyltransferase domain in the interval 1–162 (MSGYSAPRRI…LMLLMKDARA (162 aa)). Tyr138 is an active-site residue.

It belongs to the acetyltransferase family. GNAT subfamily. In terms of assembly, homodimer, forms a complex with cognate antitoxin TacA.

It carries out the reaction glycyl-tRNA(Gly) + acetyl-CoA = N-acetylglycyl-tRNA(Gly) + CoA + H(+). Functionally, toxic component of a type II toxin-antitoxin (TA) system. Overexpression of this gene alone in M.smegmatis inhibits growth, while overexpression of the tacA-tacT operon does not. Acetylates glycyl-tRNA(Gly) but not other tRNAs, blocks in vitro translation in the presence, but not absence, of acetyl-coenzyme A. Peptidyl-tRNA hydrolase (pth) counteracts the product of this enzyme in vitro. Neutralized by cognate antitoxin TacA. Does not seem to be active in laboratory growth conditions. In terms of biological role, tacA-TacT both represses and derepresses expression of its own operon. This Mycobacterium tuberculosis (strain ATCC 25618 / H37Rv) protein is tRNA-acetylating toxin.